We begin with the raw amino-acid sequence, 504 residues long: Cobyric acid synthase (504 aa).

The 197-residue stretch at 258–454 (EIEIAIIKLP…LHGIFENDEW (197 aa)) folds into the GATase cobBQ-type domain. Cys-339 serves as the catalytic Nucleophile. His-446 is an active-site residue.

Belongs to the CobB/CobQ family. CobQ subfamily.

The protein operates within cofactor biosynthesis; adenosylcobalamin biosynthesis. Functionally, catalyzes amidations at positions B, D, E, and G on adenosylcobyrinic A,C-diamide. NH(2) groups are provided by glutamine, and one molecule of ATP is hydrogenolyzed for each amidation. The chain is Cobyric acid synthase from Prochlorococcus marinus (strain NATL2A).